The primary structure comprises 779 residues: GATOR2 complex protein WDR24 (779 aa).

WD repeat units follow at residues 66-106 (SLNF…RNKQ), 112-152 (EHKR…SVST), 155-195 (GQSE…RYER), 199-239 (AHTG…VKEI), 243-285 (QTFA…IPFA), and 289-332 (EHKD…VDRA). 2 disordered regions span residues 506–526 (LETNLNNNDENEETEGSEGQA) and 570–590 (DHPSAPEPLQEKQESPHVSGS). Residues 707-729 (NCSNCKRPMSNKGWICDRCHQCA) form a C4-type zinc finger. 15 residues coordinate Zn(2+): Cys-708, Cys-711, Cys-722, Cys-725, Cys-732, Cys-735, Cys-746, Cys-749, His-751, His-754, His-757, Cys-768, Cys-772, His-774, and Cys-776. The RING-type; atypical zinc finger occupies 730-779 (SVCAVCHHVVKGLFVWCQGCSHGGHLEHVMEWLKQSKHCPAGCGHLCEYT).

The protein belongs to the WD repeat WDR24 family. As to quaternary structure, component of the GATOR2 subcomplex, composed of MIOS, SEC13, SEH1L, WDR24 and WDR59. The GATOR2 complex interacts with CASTOR1 and CASTOR2; the interaction is negatively regulated by arginine. The GATOR2 complex interacts with SESN1, SESN2 and SESN3; the interaction is negatively regulated by amino acids.

It is found in the lysosome membrane. The enzyme catalyses S-ubiquitinyl-[E2 ubiquitin-conjugating enzyme]-L-cysteine + [acceptor protein]-L-lysine = [E2 ubiquitin-conjugating enzyme]-L-cysteine + N(6)-ubiquitinyl-[acceptor protein]-L-lysine.. Its pathway is protein modification; protein ubiquitination. The GATOR2 complex is negatively regulated by the upstream amino acid sensors CASTOR1 and SESN2, which sequester the GATOR2 complex in absence of amino acids. In the presence of abundant amino acids, GATOR2 is released from CASTOR1 and SESN2 and activated. Functionally, catalytic component of the GATOR2 complex, a multiprotein complex that acts as an activator of the amino acid-sensing branch of the mTORC1 signaling pathway. The GATOR2 complex indirectly activates mTORC1 through the inhibition of the GATOR1 subcomplex. GATOR2 probably acts as an E3 ubiquitin-protein ligase toward GATOR1. In the presence of abundant amino acids, the GATOR2 complex mediates ubiquitination of the NPRL2 core component of the GATOR1 complex, leading to GATOR1 inactivation. In the absence of amino acids, GATOR2 is inhibited, activating the GATOR1 complex. In addition to its role in regulation of the mTORC1 complex, promotes the acidification of lysosomes and facilitates autophagic flux. Within the GATOR2 complex, WDR24 constitutes the catalytic subunit that mediates 'Lys-6'-linked ubiquitination of NPRL2. In Danio rerio (Zebrafish), this protein is GATOR2 complex protein WDR24.